The sequence spans 140 residues: Protein KRTCAP2 homolog (140 aa).

4 helical membrane passes run leucine 11–cysteine 31, leucine 40–valine 60, alanine 74–valine 94, and cysteine 98–isoleucine 118.

This sequence belongs to the KRTCAP2 family. In terms of assembly, component of the oligosaccharyltransferase (OST) complex.

The protein localises to the membrane. In terms of biological role, subunit of the oligosaccharyl transferase (OST) complex that catalyzes the initial transfer of a defined glycan (Glc(3)Man(9)GlcNAc(2) in eukaryotes) from the lipid carrier dolichol-pyrophosphate to an asparagine residue within an Asn-X-Ser/Thr consensus motif in nascent polypeptide chains, the first step in protein N-glycosylation. N-glycosylation occurs cotranslationally and the complex associates with the Sec61 complex at the channel-forming translocon complex that mediates protein translocation across the endoplasmic reticulum (ER). All subunits are required for a maximal enzyme activity. This is Protein KRTCAP2 homolog from Drosophila pseudoobscura pseudoobscura (Fruit fly).